Reading from the N-terminus, the 271-residue chain is MSSRVCYHINGPFFIIKLIDPKHLNSLTFEDFVYIALLLHKANDIDSVLFTVLQSSGKYFSSGGKFSAVNKLNDGDVTSEVEKVSKLVSAISSPNIFVANAFAIHKKVLVCCLNGPAIGLSASLVALCDIVYSQNDSVFLLFPFSNLGFVAEVGTSVTLTQKLGINSANEHMIFSTPVLFKELIGTIITKNYQLTNTETFNEKVLQDIKQNLEGLYPKSVLGMKELLHSEMKQKLIKAQAMETNGTLPFWASGEPFKRFKQLQEGNRRHKL.

Residues 62 to 66 and Leu120 each bind substrate; that span reads SGGKF. Residue Glu152 is the Proton donor/acceptor of the active site. The Peroxisome targeting signal (PTS1) signature appears at 269–271; sequence HKL.

This sequence belongs to the enoyl-CoA hydratase/isomerase family. Interacts with ECI1.

Its subcellular location is the peroxisome. The enzyme catalyses a (3E,5Z)-dienoyl-CoA = a (2E,4E)-(5,6-saturated)-dienoyl-CoA. Its pathway is lipid metabolism; fatty acid beta-oxidation. Its function is as follows. Peroxisomal di-isomerase that is involved in fatty acid metabolism enzyme by converting 3,5-dienoyl-CoAs to the corresponding 2,4-dienoyl-CoAs. Required for ECI1 to be located to the peroxisome. This is Delta(3,5)-Delta(2,4)-dienoyl-CoA isomerase from Saccharomyces cerevisiae (strain ATCC 204508 / S288c) (Baker's yeast).